Reading from the N-terminus, the 223-residue chain is Neurotrophic factor BDNF precursor form (223 aa).

A signal peptide spans 1–5 (SCMKA). Positions 6–114 (APMKEVSLRG…AANMSMRVRR (109 aa)) are excised as a propeptide. N107 carries an N-linked (GlcNAc...) asparagine glycan. 2 cysteine pairs are disulfide-bonded: C127–C194 and C172–C223.

This sequence belongs to the NGF-beta family.

The protein resides in the secreted. Its function is as follows. Promotes the survival of neuronal populations that are all located either in the central nervous system or directly connected to it. This chain is Neurotrophic factor BDNF precursor form (BDNF), found in Ramphotyphlops sp. (strain YPM 13663) (Blind snake).